The chain runs to 287 residues: Energy-coupling factor transporter ATP-binding protein EcfA2 (287 aa).

Residues 3-246 (VKFSQVSYVY…TNYVNQLHLD (244 aa)) enclose the ABC transporter domain. 40-47 (GQTGSGKS) serves as a coordination point for ATP.

The protein belongs to the ABC transporter superfamily. Energy-coupling factor EcfA family. Forms a stable energy-coupling factor (ECF) transporter complex composed of 2 membrane-embedded substrate-binding proteins (S component), 2 ATP-binding proteins (A component) and 2 transmembrane proteins (T component).

It is found in the cell membrane. In terms of biological role, ATP-binding (A) component of a common energy-coupling factor (ECF) ABC-transporter complex. Unlike classic ABC transporters this ECF transporter provides the energy necessary to transport a number of different substrates. The polypeptide is Energy-coupling factor transporter ATP-binding protein EcfA2 (Staphylococcus saprophyticus subsp. saprophyticus (strain ATCC 15305 / DSM 20229 / NCIMB 8711 / NCTC 7292 / S-41)).